The chain runs to 402 residues: E3 ubiquitin-protein ligase MARCHF11 (402 aa).

A compositionally biased stretch (gly residues) spans Met1 to Arg11. The tract at residues Met1 to His161 is disordered. Pro residues predominate over residues Glu21 to Pro56. Positions Glu111 to Ala124 are enriched in low complexity. The RING-CH-type zinc finger occupies Gln162–Ile222. Zn(2+)-binding residues include Cys170, Cys173, Cys186, Cys188, His196, Cys199, Cys212, and Cys215. The next 2 membrane-spanning stretches (helical) occupy residues Met245 to Ser265 and Ile278 to Ile298. Residues Tyr371–Leu374 carry the YXXL motif motif. A PDZ-binding motif is present at residues Val399–Val402.

Interacts (YXXL motif) with AP1M1. Interacts (via PDZ-binding motif) with LIN7A. Interacts with unidentified fucose glycoproteins.

The protein resides in the cytoplasmic vesicle membrane. It catalyses the reaction S-ubiquitinyl-[E2 ubiquitin-conjugating enzyme]-L-cysteine + [acceptor protein]-L-lysine = [E2 ubiquitin-conjugating enzyme]-L-cysteine + N(6)-ubiquitinyl-[acceptor protein]-L-lysine.. The protein operates within protein modification; protein ubiquitination. Functionally, E3 ubiquitin-protein ligase that mediates polyubiquitination of CD4. E3 ubiquitin ligases accept ubiquitin from an E2 ubiquitin-conjugating enzyme in the form of a thioester and then directly transfer the ubiquitin to targeted substrates. May play a role in ubuquitin-dependent protein sorting in developmenting spermatids. This chain is E3 ubiquitin-protein ligase MARCHF11, found in Homo sapiens (Human).